The sequence spans 337 residues: Glyceraldehyde-3-phosphate dehydrogenase 2 (337 aa).

NAD(+)-binding positions include arginine 11–isoleucine 12, aspartate 35, arginine 79, and threonine 121. D-glyceraldehyde 3-phosphate-binding positions include serine 153–threonine 155, threonine 184, arginine 199, threonine 212–glycine 213, and arginine 235. Catalysis depends on cysteine 154, which acts as the Nucleophile. Residue asparagine 317 participates in NAD(+) binding.

Belongs to the glyceraldehyde-3-phosphate dehydrogenase family. In terms of assembly, homotetramer.

Its subcellular location is the cytoplasm. It catalyses the reaction D-glyceraldehyde 3-phosphate + phosphate + NADP(+) = (2R)-3-phospho-glyceroyl phosphate + NADPH + H(+). It carries out the reaction D-glyceraldehyde 3-phosphate + phosphate + NAD(+) = (2R)-3-phospho-glyceroyl phosphate + NADH + H(+). Its pathway is carbohydrate degradation; glycolysis; pyruvate from D-glyceraldehyde 3-phosphate: step 1/5. Functionally, involved in photosynthetic carbon assimilation. Catalyzes the NAD(P)-dependent oxidative phosphorylation of glyceraldehyde 3-phosphate (G3P) to 1,3-bisphosphoglycerate (BPG). The first reaction step involves the formation of a hemiacetal intermediate between G3P and a cysteine residue, and this hemiacetal intermediate is then oxidized to a thioester, with concomitant reduction of NAD to NADH. The reduced NADH is then exchanged with the second NAD, and the thioester is attacked by a nucleophilic inorganic phosphate to produce BPG. It can use both NADP and NAD. This chain is Glyceraldehyde-3-phosphate dehydrogenase 2 (gap2), found in Synechocystis sp. (strain ATCC 27184 / PCC 6803 / Kazusa).